Consider the following 159-residue polypeptide: Pathogenesis-related leaf protein 4 (159 aa).

A signal peptide spans 1 to 24; the sequence is MGLFNISLLLTCLMVLAIFHSCEA. Gln-25 carries the post-translational modification Pyrrolidone carboxylic acid. Residues 32-147 form the SCP domain; the sequence is LAVHNDARAQ…NGWWFISCNY (116 aa). 3 cysteine pairs are disulfide-bonded: Cys-68–Cys-136, Cys-109–Cys-115, and Cys-131–Cys-145.

Belongs to the CRISP family.

Its function is as follows. Probably involved in the defense reaction of plants against pathogens. The chain is Pathogenesis-related leaf protein 4 from Solanum lycopersicum (Tomato).